A 710-amino-acid chain; its full sequence is Adenylosuccinate synthetase (710 aa).

2 disordered regions span residues 1–53 and 84–110; these read MPVR…PQEA and DEPP…SGRS. Polar residues-rich tracts occupy residues 10-27 and 101-110; these read YNNS…STTA and ANASNSSGRS. Residues 180-186 and 210-212 contribute to the GTP site; these read GDEGKGK and GHT. Asp-181 functions as the Proton acceptor in the catalytic mechanism. 2 residues coordinate Mg(2+): Asp-181 and Gly-210. Residues 181 to 184, 208 to 211, Thr-295, Lys-309, Gln-421, Thr-437, and Lys-567 contribute to the IMP site; these read DEGK and NAGH. His-211 acts as the Proton donor in catalysis. 563-569 contacts substrate; the sequence is AVTKKPR. Residues Arg-569 and 697–699 contribute to the GTP site; that span reads GNG.

This sequence belongs to the adenylosuccinate synthetase family. As to quaternary structure, homodimer. It depends on Mg(2+) as a cofactor.

The protein resides in the cytoplasm. It catalyses the reaction IMP + L-aspartate + GTP = N(6)-(1,2-dicarboxyethyl)-AMP + GDP + phosphate + 2 H(+). It functions in the pathway purine metabolism; AMP biosynthesis via de novo pathway; AMP from IMP: step 1/2. Functionally, plays an important role in the salvage pathway for purine nucleotide biosynthesis. Catalyzes the first committed step in the biosynthesis of AMP from IMP. The protein is Adenylosuccinate synthetase (ADSS) of Leishmania donovani.